A 1048-amino-acid chain; its full sequence is Histone deacetylase complex subunit SAP130 (1048 aa).

Residues 1–95 are disordered; it reads MGPPRHPQAG…LQSREEKQEP (95 aa). The segment covering 40–54 has biased composition (polar residues); that stretch reads TGLSQAPSQIANSGS. The segment covering 67-80 has biased composition (basic and acidic residues); it reads ESGRDSEVSAREHM. Position 232 is an omega-N-methylarginine (Arg-232). Phosphothreonine is present on Thr-355. Phosphoserine is present on residues Ser-442 and Ser-465. Disordered regions lie at residues 458–477, 576–617, and 649–687; these read PISGHRASPNPVAMETRSDN, IGTP…PEGK, and QTHSQSASTNAPAQGSSPRPSILRKKPATDGAKPKSEIH. Composition is skewed to polar residues over residues 590–613 and 649–667; these read GIHSATPINTQGLQPAPMGTQQPQ and QTHSQSASTNAPAQGSSPR. Lys-785 participates in a covalent cross-link: Glycyl lysine isopeptide (Lys-Gly) (interchain with G-Cter in SUMO2). The interval 819-871 is disordered; it reads LSMPTSDLPPGASPRKKPRKQQHVISTEEGDMMETNSTDDEKSTAKSLLVKAE. The segment at 836-1047 is interactions with SIN3A and HDAC1; that stretch reads PRKQQHVIST…KVSKLKRKEK (212 aa). Ser-855 is subject to Phosphoserine. Position 856 is a phosphothreonine (Thr-856). Glycyl lysine isopeptide (Lys-Gly) (interchain with G-Cter in SUMO2) cross-links involve residues Lys-864 and Lys-869. A Phosphoserine modification is found at Ser-875.

Belongs to the SAP130 family. As to quaternary structure, component of a mSin3A corepressor complex that contains SIN3A, SAP130, SUDS3/SAP45, ARID4B/SAP180, HDAC1 and HDAC2. Interacts (released by dead or dying cells) with CLEC4E. Acetylated. Post-translationally, sumoylated with SUMO1. As to expression, expressed in various cancer cell ines.

The protein resides in the nucleus. Its function is as follows. Acts as a transcriptional repressor. May function in the assembly and/or enzymatic activity of the mSin3A corepressor complex or in mediating interactions between the complex and other regulatory complexes. The chain is Histone deacetylase complex subunit SAP130 (SAP130) from Homo sapiens (Human).